An 82-amino-acid polypeptide reads, in one-letter code: uncharacterized protein (82 aa).

Belongs to the chlamydial CPn_0710/CT_666/TC_0037 family.

This is an uncharacterized protein from Chlamydia muridarum (strain MoPn / Nigg).